We begin with the raw amino-acid sequence, 216 residues long: NADH dehydrogenase [ubiquinone] iron-sulfur protein 7, mitochondrial (216 aa).

Residues 1-37 (MAALAALRLLHPILAVRSGVGAALQVRGVHSSMAADS) constitute a mitochondrion transit peptide. [4Fe-4S] cluster contacts are provided by C91 and C92. R114 bears the Hydroxyarginine mark. The [4Fe-4S] cluster site is built by C156 and C186.

The protein belongs to the complex I 20 kDa subunit family. In terms of assembly, core subunit of respiratory chain NADH dehydrogenase (Complex I) which is composed of 45 different subunits. This is a component of the iron-sulfur (IP) fragment of the enzyme. It depends on [4Fe-4S] cluster as a cofactor. Hydroxylated ar Arg-114 by NDUFAF5 early in the pathway of assembly of complex I, before the formation of the juncture between peripheral and membrane arms.

It is found in the mitochondrion inner membrane. It catalyses the reaction a ubiquinone + NADH + 5 H(+)(in) = a ubiquinol + NAD(+) + 4 H(+)(out). Its function is as follows. Core subunit of the mitochondrial membrane respiratory chain NADH dehydrogenase (Complex I) which catalyzes electron transfer from NADH through the respiratory chain, using ubiquinone as an electron acceptor. Essential for the catalytic activity of complex I. The chain is NADH dehydrogenase [ubiquinone] iron-sulfur protein 7, mitochondrial (NDUFS7) from Bos taurus (Bovine).